The primary structure comprises 229 residues: Uracil-DNA glycosylase (229 aa).

Aspartate 67 (proton acceptor) is an active-site residue.

Belongs to the uracil-DNA glycosylase (UDG) superfamily. UNG family.

Its subcellular location is the cytoplasm. The enzyme catalyses Hydrolyzes single-stranded DNA or mismatched double-stranded DNA and polynucleotides, releasing free uracil.. Excises uracil residues from the DNA which can arise as a result of misincorporation of dUMP residues by DNA polymerase or due to deamination of cytosine. The polypeptide is Uracil-DNA glycosylase (Coxiella burnetii (strain CbuK_Q154) (Coxiella burnetii (strain Q154))).